The primary structure comprises 122 residues: Large ribosomal subunit protein uL14 (122 aa).

Belongs to the universal ribosomal protein uL14 family. In terms of assembly, part of the 50S ribosomal subunit. Forms a cluster with proteins L3 and L19. In the 70S ribosome, L14 and L19 interact and together make contacts with the 16S rRNA in bridges B5 and B8.

Its function is as follows. Binds to 23S rRNA. Forms part of two intersubunit bridges in the 70S ribosome. This is Large ribosomal subunit protein uL14 from Brucella abortus (strain 2308).